Reading from the N-terminus, the 372-residue chain is Pluviatolide O-methyltransferase (372 aa).

Residues Gly-214, Asp-237, Asp-257, Met-258, and Lys-271 each contribute to the S-adenosyl-L-homocysteine site. His-275 serves as the catalytic Proton acceptor. Active-site residues include Asp-306 and Glu-338.

This sequence belongs to the class I-like SAM-binding methyltransferase superfamily. Cation-independent O-methyltransferase family. COMT subfamily. In terms of assembly, homodimer. In terms of tissue distribution, mostly expressed in stems, and, to a lower extent, in leaves.

It carries out the reaction (-)-pluviatolide + S-adenosyl-L-methionine = (-)-bursehernin + S-adenosyl-L-homocysteine + H(+). It participates in aromatic compound metabolism; phenylpropanoid biosynthesis. Its function is as follows. O-methyltransferase involved in the biosynthesis of etoposide, a chemotherapeutic compound of the topoisomerase inhibitor family. Catalyzes the methylation of (-)-pluviatolide to produce (-)-bursehernin. In Sinopodophyllum hexandrum (Himalayan may apple), this protein is Pluviatolide O-methyltransferase.